A 914-amino-acid polypeptide reads, in one-letter code: Chlorate reductase subunit alpha (914 aa).

A signal peptide (tat-type signal) is located at residues 1 to 32; sequence MNSPDEHNGRRRFLQFSAAALASAAASPSLWA. The 4Fe-4S Mo/W bis-MGD-type domain maps to 62-125; the sequence is DSVGVMTHSN…VYCSWSKQPD (64 aa). The [4Fe-4S] cluster site is built by His69, Cys73, Cys77, and Cys111. Residue Asp205 coordinates Mo-bis(molybdopterin guanine dinucleotide).

Belongs to the prokaryotic molybdopterin-containing oxidoreductase family. In terms of assembly, heterotrimer of alpha, beta and gamma subunits. Requires [4Fe-4S] cluster as cofactor. The cofactor is Mo-bis(molybdopterin guanine dinucleotide). Predicted to be exported by the Tat system. The position of the signal peptide cleavage has not been experimentally proven.

It localises to the periplasm. The enzyme catalyses chlorate + AH2 = chlorite + A + H2O. Functionally, terminal reductase that allows anaerobic growth on chlorate as the sole respiratory oxidant. The polypeptide is Chlorate reductase subunit alpha (clrA) (Ideonella dechloratans).